Here is a 916-residue protein sequence, read N- to C-terminus: Cadherin-4 (916 aa).

The first 20 residues, 1–20, serve as a signal peptide directing secretion; that stretch reads MTAGAGVLLLLLSLSGALRA. The propeptide occupies 21–169; sequence HNEDLTTRET…NANGLRRRKR (149 aa). Residues 124-168 form a disordered region; the sequence is TSSPHSGHKPQKGKKVVALDPSPPPKDTLLPWPQHQNANGLRRRK. A compositionally biased stretch (basic residues) spans 129-138; it reads SGHKPQKGKK. Cadherin domains follow at residues 170–277, 278–392, 393–507, 508–613, and 614–724; these read DWVI…RPEF, INQV…PPEF, TAST…APYF, PSNH…DNAP, and ELLP…TIGA. The Extracellular segment spans residues 170-734; that stretch reads DWVIPPINVP…VAAAGLGTGA (565 aa). N-linked (GlcNAc...) asparagine glycosylation is found at N283, N412, N557, N632, N661, and N702. The chain crosses the membrane as a helical span at residues 735 to 756; that stretch reads IVAILICILILLTMVLLFVMWM. Residues 757-916 are Cytoplasmic-facing; it reads KRREKERHTK…ADMYGGGEED (160 aa). The interval 806–838 is disordered; it reads MGHVPSKAPGVRRVDERPVGAEPQYPIRPMVPH.

As to expression, expressed mainly in brain but also found in other tissues.

Its subcellular location is the cell membrane. Cadherins are calcium-dependent cell adhesion proteins. They preferentially interact with themselves in a homophilic manner in connecting cells; cadherins may thus contribute to the sorting of heterogeneous cell types. May play an important role in retinal development. The polypeptide is Cadherin-4 (CDH4) (Homo sapiens (Human)).